We begin with the raw amino-acid sequence, 181 residues long: Isopentenyl-diphosphate Delta-isomerase (181 aa).

The Mn(2+) site is built by His25 and His32. Residues 30–164 enclose the Nudix hydrolase domain; sequence PLHLAFSCWL…PWAFSPWMVM (135 aa). Residue Cys67 is part of the active site. Residue Cys67 coordinates Mg(2+). His69 is a Mn(2+) binding site. A Mg(2+)-binding site is contributed by Glu87. Positions 114 and 116 each coordinate Mn(2+). Residue Glu116 is part of the active site.

This sequence belongs to the IPP isomerase type 1 family. As to quaternary structure, homodimer. Requires Mg(2+) as cofactor. Mn(2+) serves as cofactor.

It localises to the cytoplasm. It catalyses the reaction isopentenyl diphosphate = dimethylallyl diphosphate. The protein operates within isoprenoid biosynthesis; dimethylallyl diphosphate biosynthesis; dimethylallyl diphosphate from isopentenyl diphosphate: step 1/1. Its function is as follows. Catalyzes the 1,3-allylic rearrangement of the homoallylic substrate isopentenyl (IPP) to its highly electrophilic allylic isomer, dimethylallyl diphosphate (DMAPP). The sequence is that of Isopentenyl-diphosphate Delta-isomerase from Salmonella typhi.